The following is a 154-amino-acid chain: SsrA-binding protein (154 aa).

The disordered stretch occupies residues 135-154; sequence KREDLKRRQDQRDMARAMKR.

Belongs to the SmpB family.

It is found in the cytoplasm. In terms of biological role, required for rescue of stalled ribosomes mediated by trans-translation. Binds to transfer-messenger RNA (tmRNA), required for stable association of tmRNA with ribosomes. tmRNA and SmpB together mimic tRNA shape, replacing the anticodon stem-loop with SmpB. tmRNA is encoded by the ssrA gene; the 2 termini fold to resemble tRNA(Ala) and it encodes a 'tag peptide', a short internal open reading frame. During trans-translation Ala-aminoacylated tmRNA acts like a tRNA, entering the A-site of stalled ribosomes, displacing the stalled mRNA. The ribosome then switches to translate the ORF on the tmRNA; the nascent peptide is terminated with the 'tag peptide' encoded by the tmRNA and targeted for degradation. The ribosome is freed to recommence translation, which seems to be the essential function of trans-translation. The sequence is that of SsrA-binding protein from Microcystis aeruginosa (strain NIES-843 / IAM M-2473).